The primary structure comprises 434 residues: D-amino acid dehydrogenase (434 aa).

3–17 (VLVLGSGVIGTTSAW) contacts FAD.

It belongs to the DadA oxidoreductase family. FAD is required as a cofactor.

The catalysed reaction is a D-alpha-amino acid + A + H2O = a 2-oxocarboxylate + AH2 + NH4(+). The protein operates within amino-acid degradation; D-alanine degradation; NH(3) and pyruvate from D-alanine: step 1/1. Its function is as follows. Oxidative deamination of D-amino acids. In Stenotrophomonas maltophilia (strain R551-3), this protein is D-amino acid dehydrogenase.